The chain runs to 221 residues: Flagellar L-ring protein 2 (221 aa).

Positions M1 to G16 are cleaved as a signal peptide. The N-palmitoyl cysteine moiety is linked to residue C17. A lipid anchor (S-diacylglycerol cysteine) is attached at C17.

Belongs to the FlgH family. The basal body constitutes a major portion of the flagellar organelle and consists of four rings (L,P,S, and M) mounted on a central rod.

Its subcellular location is the cell outer membrane. The protein resides in the bacterial flagellum basal body. Assembles around the rod to form the L-ring and probably protects the motor/basal body from shearing forces during rotation. In Yersinia pseudotuberculosis serotype I (strain IP32953), this protein is Flagellar L-ring protein 2.